We begin with the raw amino-acid sequence, 552 residues long: MDTKRLILFVIFSFSILMLWDSWQRDQQPPAASQTQTTAQSVEDGSVPQAAKSSASAANQASVPAETGFRLQSAERINVETDLYKASIDTIGGDLRRLELREHKDDEDQTKNFVLMDDQSAPMLYVAQTGLIGNGLPTHKEVFTSESTNYQLAPGEDKLDVRLTWKGDNGVEVHKIYTFRRDSYAIEVSYEIRNNSDTAVDPSVYYQIVHDNQSHQGSYMMPTFTGGAYYTEADKYKKLSFSDMAKTNLSKNASDGWVGLVQHYFVSAWIPEDGLVREFYTKKLSDNVYSIGSVSPLGNIAPGQSVTLKSRLYAGPQTQSELKSVAPGLEYTVDYGWLTVIATPLFWILSSIQKVVHNWGVAIILLTILIKLVFYPLSAASYRSMANMRELAPRLQRLKEQYGDDRQKLHQAMMEMYKTEKINPMGGCLPILVQIPVFIALYWVLLGSVEMRHAPFMLWIQDLSAVDPYYVLPILMGITMIIQTKLNPKPADPIQAKVMTIMPIVFSVFFFFFPAGLVLYWLVNNILSIAQQWYINRSTERAAAKKKGNARR.

Residues 3–23 (TKRLILFVIFSFSILMLWDSW) traverse the membrane as a helical segment. Positions 29–65 (PPAASQTQTTAQSVEDGSVPQAAKSSASAANQASVPA) are disordered. 4 helical membrane-spanning segments follow: residues 359 to 379 (WGVAIILLTILIKLVFYPLSA), 429 to 449 (LPILVQIPVFIALYWVLLGSV), 463 to 483 (LSAVDPYYVLPILMGITMIIQ), and 503 to 523 (PIVFSVFFFFFPAGLVLYWLV).

Belongs to the OXA1/ALB3/YidC family. Type 1 subfamily. In terms of assembly, interacts with the Sec translocase complex via SecD. Specifically interacts with transmembrane segments of nascent integral membrane proteins during membrane integration.

It localises to the cell inner membrane. Functionally, required for the insertion and/or proper folding and/or complex formation of integral membrane proteins into the membrane. Involved in integration of membrane proteins that insert both dependently and independently of the Sec translocase complex, as well as at least some lipoproteins. Aids folding of multispanning membrane proteins. This is Membrane protein insertase YidC from Methylobacillus flagellatus (strain ATCC 51484 / DSM 6875 / VKM B-1610 / KT).